Reading from the N-terminus, the 136-residue chain is Small ribosomal subunit protein eS8 (136 aa).

Belongs to the eukaryotic ribosomal protein eS8 family. Part of the 30S ribosomal subunit.

In Aeropyrum pernix (strain ATCC 700893 / DSM 11879 / JCM 9820 / NBRC 100138 / K1), this protein is Small ribosomal subunit protein eS8 (rps8e).